Reading from the N-terminus, the 143-residue chain is Large ribosomal subunit protein uL11 (143 aa).

Belongs to the universal ribosomal protein uL11 family. In terms of assembly, part of the ribosomal stalk of the 50S ribosomal subunit. Interacts with L10 and the large rRNA to form the base of the stalk. L10 forms an elongated spine to which L12 dimers bind in a sequential fashion forming a multimeric L10(L12)X complex. In terms of processing, one or more lysine residues are methylated.

Functionally, forms part of the ribosomal stalk which helps the ribosome interact with GTP-bound translation factors. The polypeptide is Large ribosomal subunit protein uL11 (Koribacter versatilis (strain Ellin345)).